The primary structure comprises 365 residues: UPF0324 membrane protein Cj0999c (365 aa).

The next 11 membrane-spanning stretches (helical) occupy residues 12–34 (IVRSNFKGLLFTACIVIFAMYLS), 44–63 (HLAATAFAIIIGVLLSPWFF), 83–100 (LGIVLYGFNITLTELLSV), 105–127 (FLLSAIVIFFVFIIALFVGTKIF), 134–153 (SMLVGAGSAICGAAAVLALE), 163–185 (GILAVGTVVIFGLVFMFLYPIAF), 197–219 (AMGVFMGATLHEVANVAGAAEMA), 234–256 (VIIKMMRVILLVPFLLIVTYFFA), 269–288 (SITIPYFAFAFLGMIVLNTY), 303–325 (IISLGKTLCTLCIVFAMAALGLQ), and 338–360 (VFGLAFVLGLVLIFGGYFLTLAF).

It belongs to the UPF0324 family.

The protein localises to the cell membrane. This chain is UPF0324 membrane protein Cj0999c, found in Campylobacter jejuni subsp. jejuni serotype O:2 (strain ATCC 700819 / NCTC 11168).